Here is a 247-residue protein sequence, read N- to C-terminus: Protein FAM133B (247 aa).

2 disordered regions span residues 19–38 (SRGPIQSSGPTIQDYLNRPR) and 70–247 (KKEL…PDSP). Basic and acidic residues predominate over residues 70–80 (KKELEKHREKL). Position 82 is a phosphoserine (S82). The segment covering 89–102 (KKRQRKKKEKKKSG) has biased composition (basic residues). Over residues 103–119 (RYSSSSSSSSDSSSSSS) the composition is skewed to low complexity. A compositionally biased stretch (basic residues) spans 128-140 (QGKRRKKKKNRSH). Residues 165–176 (KDGTEKEKDIKG) show a composition bias toward basic and acidic residues. Residues S191, S192, S194, and S196 each carry the phosphoserine modification. Residues 211-221 (SSEEREKATEK) show a composition bias toward basic and acidic residues. Residues 222–239 (TKKKKKHKKHSKKKKKKA) are compositionally biased toward basic residues.

Belongs to the FAM133 family.

The sequence is that of Protein FAM133B (FAM133B) from Homo sapiens (Human).